The following is a 485-amino-acid chain: Cysteine--tRNA ligase (485 aa).

Position 29 (Cys-29) interacts with Zn(2+). The short motif at 31–41 (VTVYDHCHIGH) is the 'HIGH' region element. The Zn(2+) site is built by Cys-209, His-234, and Glu-238. The 'KMSKS' region signature appears at 266–270 (KMSKS). Position 269 (Lys-269) interacts with ATP.

It belongs to the class-I aminoacyl-tRNA synthetase family. As to quaternary structure, monomer. Requires Zn(2+) as cofactor.

It localises to the cytoplasm. The enzyme catalyses tRNA(Cys) + L-cysteine + ATP = L-cysteinyl-tRNA(Cys) + AMP + diphosphate. This Geobacter metallireducens (strain ATCC 53774 / DSM 7210 / GS-15) protein is Cysteine--tRNA ligase.